We begin with the raw amino-acid sequence, 237 residues long: Large ribosomal subunit protein uL1 (237 aa).

This sequence belongs to the universal ribosomal protein uL1 family. In terms of assembly, part of the 50S ribosomal subunit.

Functionally, binds directly to 23S rRNA. The L1 stalk is quite mobile in the ribosome, and is involved in E site tRNA release. In terms of biological role, protein L1 is also a translational repressor protein, it controls the translation of the L11 operon by binding to its mRNA. This is Large ribosomal subunit protein uL1 from Corynebacterium kroppenstedtii (strain DSM 44385 / JCM 11950 / CIP 105744 / CCUG 35717).